The sequence spans 302 residues: 4-hydroxy-tetrahydrodipicolinate synthase (302 aa).

Thr-46 provides a ligand contact to pyruvate. The Proton donor/acceptor role is filled by Tyr-135. Residue Lys-164 is the Schiff-base intermediate with substrate of the active site. Residue Val-206 coordinates pyruvate.

Belongs to the DapA family. Homotetramer; dimer of dimers.

It is found in the cytoplasm. The catalysed reaction is L-aspartate 4-semialdehyde + pyruvate = (2S,4S)-4-hydroxy-2,3,4,5-tetrahydrodipicolinate + H2O + H(+). Its pathway is amino-acid biosynthesis; L-lysine biosynthesis via DAP pathway; (S)-tetrahydrodipicolinate from L-aspartate: step 3/4. Catalyzes the condensation of (S)-aspartate-beta-semialdehyde [(S)-ASA] and pyruvate to 4-hydroxy-tetrahydrodipicolinate (HTPA). This is 4-hydroxy-tetrahydrodipicolinate synthase from Acidobacterium capsulatum (strain ATCC 51196 / DSM 11244 / BCRC 80197 / JCM 7670 / NBRC 15755 / NCIMB 13165 / 161).